We begin with the raw amino-acid sequence, 782 residues long: E3 UFM1-protein ligase 1 homolog (782 aa).

A disordered region spans residues 404 to 478; it reads NVSTQELEDE…SRGGGGASKK (75 aa).

Belongs to the UFL1 family.

Its function is as follows. E3 UFM1-protein ligase that mediates ufmylation of target proteins. The protein is E3 UFM1-protein ligase 1 homolog of Drosophila melanogaster (Fruit fly).